Reading from the N-terminus, the 519-residue chain is Spermidine/putrescine import ATP-binding protein PotA (519 aa).

Positions 6–401 (LHLRDITKIY…PNSLWVANFI (396 aa)) constitute an ABC transporter domain. An ATP-binding site is contributed by 39-46 (GPSGCGKT). The segment at 107–270 (RKPKDNVDQS…EQFENKNITR (164 aa)) is insert.

It belongs to the ABC transporter superfamily. Spermidine/putrescine importer (TC 3.A.1.11.1) family. As to quaternary structure, the complex is composed of two ATP-binding proteins (PotA), two transmembrane proteins (PotB and PotC) and a solute-binding protein (PotD).

Its subcellular location is the cell membrane. The catalysed reaction is ATP + H2O + polyamine-[polyamine-binding protein]Side 1 = ADP + phosphate + polyamineSide 2 + [polyamine-binding protein]Side 1.. Functionally, part of the ABC transporter complex PotABCD involved in spermidine/putrescine import. Responsible for energy coupling to the transport system. This chain is Spermidine/putrescine import ATP-binding protein PotA, found in Ureaplasma parvum serovar 3 (strain ATCC 700970).